The following is a 181-amino-acid chain: Dual-action ribosomal maturation protein DarP (181 aa).

The segment at 1–23 is disordered; sequence MTGIKKPMSQYQDDNELEDWGPS.

It belongs to the DarP family.

The protein localises to the cytoplasm. In terms of biological role, member of a network of 50S ribosomal subunit biogenesis factors which assembles along the 30S-50S interface, preventing incorrect 23S rRNA structures from forming. Promotes peptidyl transferase center (PTC) maturation. In Aeromonas salmonicida (strain A449), this protein is Dual-action ribosomal maturation protein DarP.